Here is a 248-residue protein sequence, read N- to C-terminus: Flavodoxin/ferredoxin--NADP reductase (248 aa).

The 100-residue stretch at 2–101 folds into the FAD-binding FR-type domain; it reads ADWVTGKVTK…SEAAGFFVLD (100 aa). Aspartate 17 contacts NADP(+). FAD-binding positions include 50-53, tyrosine 66, 74-76, and threonine 116; these read RAYS and KLS. Residues 143–144, 173–174, arginine 184, 214–216, and aspartate 220 contribute to the NADP(+) site; these read AR, SR, and NPQ. 247 to 248 is an FAD binding site; it reads YW.

Belongs to the ferredoxin--NADP reductase type 1 family. In terms of assembly, monomer. FAD serves as cofactor.

Its subcellular location is the cytoplasm. The enzyme catalyses 2 reduced [2Fe-2S]-[ferredoxin] + NADP(+) + H(+) = 2 oxidized [2Fe-2S]-[ferredoxin] + NADPH. The catalysed reaction is reduced [flavodoxin] + NADP(+) = oxidized [flavodoxin] + NADPH + 2 H(+). Its function is as follows. Transports electrons between flavodoxin or ferredoxin and NADPH. Reduces flavodoxin 1, flavodoxin 2 and ferredoxin, ferredoxin being the kinetically and thermodynamically preferred partner. Required for the activation of several enzymes such as pyruvate formate-lyase, anaerobic ribonucleotide reductase and cobalamin-dependent methionine synthase. This chain is Flavodoxin/ferredoxin--NADP reductase, found in Escherichia coli (strain K12).